A 143-amino-acid chain; its full sequence is Large ribosomal subunit protein uL11 (143 aa).

The protein belongs to the universal ribosomal protein uL11 family. In terms of assembly, part of the ribosomal stalk of the 50S ribosomal subunit. Interacts with L10 and the large rRNA to form the base of the stalk. L10 forms an elongated spine to which L12 dimers bind in a sequential fashion forming a multimeric L10(L12)X complex. Post-translationally, one or more lysine residues are methylated.

In terms of biological role, forms part of the ribosomal stalk which helps the ribosome interact with GTP-bound translation factors. This chain is Large ribosomal subunit protein uL11, found in Janthinobacterium sp. (strain Marseille) (Minibacterium massiliensis).